The primary structure comprises 310 residues: NAD-dependent protein deacylase sirtuin-5, mitochondrial (310 aa).

Residues 1–36 constitute a mitochondrion transit peptide; it reads MQPLQIAPCRLLYGLYRGLKSPASTGTRICPAMARP. The 271-residue stretch at 37 to 307 folds into the Deacetylase sirtuin-type domain; sequence SSNMADFRKL…PEALAPHETG (271 aa). 58–77 contacts NAD(+); sequence GAGVSAESGVPTFRGAGGYW. The substrate site is built by tyrosine 102 and arginine 105. An NAD(+)-binding site is contributed by 140–143; the sequence is QNID. Residue histidine 158 is the Proton acceptor of the active site. Residues cysteine 166, cysteine 169, cysteine 207, and cysteine 212 each coordinate Zn(2+). NAD(+)-binding positions include 249-251, 275-277, and cysteine 293; these read GTS and NME.

The protein belongs to the sirtuin family. Class III subfamily. In terms of assembly, monomer. Homodimer. Interacts with CPS1. Interacts with PCCA. It depends on Zn(2+) as a cofactor.

The protein localises to the mitochondrion. Its subcellular location is the cytoplasm. It is found in the cytosol. The protein resides in the nucleus. It carries out the reaction N(6)-malonyl-L-lysyl-[protein] + NAD(+) + H2O = 2''-O-malonyl-ADP-D-ribose + nicotinamide + L-lysyl-[protein]. It catalyses the reaction N(6)-succinyl-L-lysyl-[protein] + NAD(+) + H2O = 2''-O-succinyl-ADP-D-ribose + nicotinamide + L-lysyl-[protein]. The enzyme catalyses N(6)-glutaryl-L-lysyl-[protein] + NAD(+) + H2O = 2''-O-glutaryl-ADP-D-ribose + nicotinamide + L-lysyl-[protein]. NAD-dependent lysine demalonylase, desuccinylase and deglutarylase that specifically removes malonyl, succinyl and glutaryl groups on target proteins. Activates CPS1 and contributes to the regulation of blood ammonia levels during prolonged fasting: acts by mediating desuccinylation and deglutarylation of CPS1, thereby increasing CPS1 activity in response to elevated NAD levels during fasting. Activates SOD1 by mediating its desuccinylation, leading to reduced reactive oxygen species. Activates SHMT2 by mediating its desuccinylation. Modulates ketogenesis through the desuccinylation and activation of HMGCS2. Has weak NAD-dependent protein deacetylase activity; however this activity may not be physiologically relevant in vivo. Can deacetylate cytochrome c (CYCS) and a number of other proteins in vitro such as UOX. The sequence is that of NAD-dependent protein deacylase sirtuin-5, mitochondrial from Canis lupus familiaris (Dog).